A 269-amino-acid chain; its full sequence is Glutamate racemase (269 aa).

Residues 11–12 (DS) and 43–44 (YG) contribute to the substrate site. Residue C74 is the Proton donor/acceptor of the active site. 75–76 (NT) is a binding site for substrate. C185 (proton donor/acceptor) is an active-site residue. Residue 186–187 (TH) coordinates substrate.

Belongs to the aspartate/glutamate racemases family.

It catalyses the reaction L-glutamate = D-glutamate. It participates in cell wall biogenesis; peptidoglycan biosynthesis. Functionally, provides the (R)-glutamate required for cell wall biosynthesis. The sequence is that of Glutamate racemase from Bacillus cereus (strain ATCC 10987 / NRS 248).